The following is a 345-amino-acid chain: 3-hydroxy-5-methyl-1-naphthoate 3-O-methyltransferase (345 aa).

D205 serves as a coordination point for S-adenosyl-L-methionine. The active-site Proton acceptor is H252.

It belongs to the class I-like SAM-binding methyltransferase superfamily. Cation-independent O-methyltransferase family.

The enzyme catalyses 3-hydroxy-5-methyl-1-naphthoate + S-adenosyl-L-methionine = 3-methoxy-5-methyl-1-naphthoate + S-adenosyl-L-homocysteine + H(+). It participates in antibiotic biosynthesis. Inhibited by different divalent cations, such as Mg(2+), Mn(2+), Fe(2+), Cu(2+) and Zn(2+). In terms of biological role, O-methyltransferase that mediates the formation of 3-methoxy-5-methyl-1-naphthoate from 3-hydroxy-5-methyl-1-naphthoate in the biosynthesis of the antitumor antibiotic azinomycin B. The sequence is that of 3-hydroxy-5-methyl-1-naphthoate 3-O-methyltransferase from Streptomyces sahachiroi.